We begin with the raw amino-acid sequence, 200 residues long: Large ribosomal subunit protein uL4 (200 aa).

Residues 42 to 65 (TRAQKTRSEVSGGGAKPWRQKGTG) form a disordered region.

Belongs to the universal ribosomal protein uL4 family. In terms of assembly, part of the 50S ribosomal subunit.

One of the primary rRNA binding proteins, this protein initially binds near the 5'-end of the 23S rRNA. It is important during the early stages of 50S assembly. It makes multiple contacts with different domains of the 23S rRNA in the assembled 50S subunit and ribosome. In terms of biological role, forms part of the polypeptide exit tunnel. This Vibrio parahaemolyticus serotype O3:K6 (strain RIMD 2210633) protein is Large ribosomal subunit protein uL4.